The sequence spans 214 residues: uncharacterized protein (214 aa).

Positions 1-18 (MTMYIGLILVVLATFCQG) are cleaved as a signal peptide. A glycan (N-linked (GlcNAc...) asparagine; by host) is linked at Asn64.

This is an uncharacterized protein from Magallana gigas (Pacific oyster).